Reading from the N-terminus, the 378-residue chain is Ecotin-like protein 3 (378 aa).

2 disordered regions span residues 191 to 216 (HRLSSSTPPLIPSAVRGSAHEAHAAP) and 238 to 378 (PQNN…KADP). Positions 274–287 (NEPSPSRPRLSSTE) are enriched in polar residues. Basic and acidic residues predominate over residues 337–348 (RKAEDNVYEKTM). Residues 362–378 (KASASSKKSGNGSKADP) are compositionally biased toward low complexity.

It belongs to the protease inhibitor I11 (ecotin) family.

This is Ecotin-like protein 3 from Leishmania infantum.